A 65-amino-acid chain; its full sequence is UPF0434 protein BH12860 (65 aa).

The protein belongs to the UPF0434 family.

The protein is UPF0434 protein BH12860 of Bartonella henselae (strain ATCC 49882 / DSM 28221 / CCUG 30454 / Houston 1) (Rochalimaea henselae).